Reading from the N-terminus, the 186-residue chain is uncharacterized protein (186 aa).

The protein belongs to the geranylgeranyl reductase family. ChlP subfamily.

This is an uncharacterized protein from Methanosarcina barkeri.